A 550-amino-acid chain; its full sequence is Membrane protein insertase YidC (550 aa).

The chain crosses the membrane as a helical span at residues 6 to 26 (NLLVIALLFVSFMIWQTWEQD). Disordered regions lie at residues 28-54 (APKPQVQQTTQTTTTAAGSAASQGVPA) and 111-132 (QSGLTGRNGPDNPNNNKGRPLY). The span at 30 to 52 (KPQVQQTTQTTTTAAGSAASQGV) shows a compositional bias: low complexity. The segment covering 111-127 (QSGLTGRNGPDNPNNNK) has biased composition (polar residues). The next 4 helical transmembrane spans lie at 346-366 (KWIHSFLGNWGFSIIAITFIV), 421-441 (LGGCFPLLIQMPIFLALYYML), 459-479 (LSAQDPYYILPILMGATMFFI), and 500-520 (PVIFTVFFLWFPSGLVLYYIV).

Belongs to the OXA1/ALB3/YidC family. Type 1 subfamily. As to quaternary structure, interacts with the Sec translocase complex via SecD. Specifically interacts with transmembrane segments of nascent integral membrane proteins during membrane integration.

The protein localises to the cell inner membrane. In terms of biological role, required for the insertion and/or proper folding and/or complex formation of integral membrane proteins into the membrane. Involved in integration of membrane proteins that insert both dependently and independently of the Sec translocase complex, as well as at least some lipoproteins. Aids folding of multispanning membrane proteins. This is Membrane protein insertase YidC from Cronobacter sakazakii (strain ATCC BAA-894) (Enterobacter sakazakii).